A 794-amino-acid polypeptide reads, in one-letter code: Copper amine oxidase-like protein cao2 (794 aa).

Substrate is bound by residues 307-318 (AYDLGEYGVGYR) and 391-396 (AANYEY). The active-site Proton acceptor is D309. Y394 serves as the catalytic Schiff-base intermediate with substrate; via topaquinone. Y394 carries the post-translational modification 2',4',5'-topaquinone. Residues H445 and H447 each coordinate Cu cation. The tract at residues 563 to 584 (GDYAPQASDDTPKGLSKWISDD) is disordered. D593 and I594 together coordinate Mn(2+). H604 is a binding site for Cu cation. Positions 634–748 (ALDTSSSVNS…NGGHHHHHHH (115 aa)) are disordered. Residues 637 to 649 (TSSSVNSTSEATS) show a composition bias toward low complexity. The segment covering 652-714 (THHENLRDTS…DAAQKHEGRS (63 aa)) has biased composition (basic and acidic residues). A compositionally biased stretch (polar residues) spans 716-727 (TLAQPGQQNANQ).

Belongs to the copper/topaquinone oxidase family. As to quaternary structure, homodimer. The cofactor is Cu cation. Zn(2+) is required as a cofactor. Requires L-topaquinone as cofactor. Mn(2+) serves as cofactor. Post-translationally, topaquinone (TPQ) is generated by copper-dependent autoxidation of a specific tyrosyl residue.

The protein localises to the cytoplasm. It carries out the reaction a primary methyl amine + O2 + H2O = an aldehyde + H2O2 + NH4(+). Functionally, copper amine oxidase-like protein that does not show any copper amine oxidase activity. May be the appropriate amine substrate for cao2 has not been identified yet. This chain is Copper amine oxidase-like protein cao2 (cao2), found in Schizosaccharomyces pombe (strain 972 / ATCC 24843) (Fission yeast).